We begin with the raw amino-acid sequence, 115 residues long: MGVEISLDPPVCPIQANGGVSKHKMINHCDKILAFKVKSSNNSNYSVNLIYGILKVCDVKELVITRKPGKPQADKLIIQYCMVEDENADPKPLFANGVPPGELSGETVIKLSAAE.

Positions 1-115 (MGVEISLDPP…ETVIKLSAAE (115 aa)) constitute an MSP domain.

This is an uncharacterized protein from Caenorhabditis elegans.